Here is a 181-residue protein sequence, read N- to C-terminus: MEKIIIDENQFLRTISRISHEIIEKHQRLDNIVIVGIKRRGAEIAELIKKKIADLANVELPSIDLDITFYRDDLEYAEPDSKSPTYSGASSFISIHNKEVILVDDVLYTGRTIRAALDALVDFGRAAKIELVIFVDRGHRELPIRADYVGKNVPTSRSEEVQVRTLKFDNCYEVALLSPTK.

Residues 39–40 (RR), 104–112 (DDVLYTGRT), R137, and V161 contribute to the substrate site. The PRPP-binding motif lies at 100–112 (VILVDDVLYTGRT).

It belongs to the purine/pyrimidine phosphoribosyltransferase family. PyrR subfamily.

It carries out the reaction UMP + diphosphate = 5-phospho-alpha-D-ribose 1-diphosphate + uracil. Functionally, regulates the transcription of the pyrimidine nucleotide (pyr) operon in response to exogenous pyrimidines. Its function is as follows. Also displays a weak uracil phosphoribosyltransferase activity which is not physiologically significant. This chain is Bifunctional protein PyrR, found in Pasteurella multocida (strain Pm70).